We begin with the raw amino-acid sequence, 145 residues long: Small ribosomal subunit protein uS12 (145 aa).

Residue Pro64 is modified to Hydroxyproline.

It belongs to the universal ribosomal protein uS12 family.

The protein is Small ribosomal subunit protein uS12 (rps23) of Aspergillus fumigatus (strain ATCC MYA-4609 / CBS 101355 / FGSC A1100 / Af293) (Neosartorya fumigata).